Consider the following 247-residue polypeptide: Complement C1q subcomponent subunit A (247 aa).

The signal sequence occupies residues 1 to 24 (MEAPRGWLVIMISVLAVSLASSAA). Residues 26-116 (DTCRDLDGRD…NPGNIKDQRR (91 aa)) are disordered. The segment covering 27-38 (TCRDLDGRDGAA) has biased composition (basic and acidic residues). Positions 33–111 (GRDGAARKPG…KGIKGNPGNI (79 aa)) constitute a Collagen-like domain. 4-hydroxyproline occurs at positions 41 and 47. A 5-hydroxylysine modification is found at Lys-50. Residue Lys-50 is glycosylated (O-linked (Gal...) hydroxylysine). Residues Pro-56 and Pro-59 each carry the 4-hydroxyproline modification. Lys-69 is modified (5-hydroxylysine). An O-linked (Gal...) hydroxylysine glycan is attached at Lys-69. A 4-hydroxyproline mark is found at Pro-81 and Pro-87. Residues 98–109 (LPGLKGIKGNPG) are compositionally biased toward low complexity. Lys-102 is modified (5-hydroxylysine). The O-linked (Gal...) hydroxylysine glycan is linked to Lys-102. A C1q domain is found at 112–247 (KDQRRPAFSA…FSGFLIFPST (136 aa)). Residues Cys-174 and Cys-192 are joined by a disulfide bond. Gln-201 is a Ca(2+) binding site.

In terms of assembly, core component of the complement C1 complex, a calcium-dependent complex composed of 1 molecule of the C1Q subcomplex, 2 molecules of C1R and 2 molecules of C1S. The C1Q subcomplex is composed 18 subunits: 3 chains of C1QA, C1QB, and C1QC trimerize to form 6 collagen-like triple helices connected to six globular ligand-recognition modules (C1q domain). Interacts with CR1 (via Sushi 24 and Sushi 25 domains). Interacts (via C-terminus) with CD33; this interaction activates CD33 inhibitory motifs. In terms of processing, O-linked glycans are assumed to be the Glc-Gal disaccharides typically found as secondary modifications of hydroxylated lysines in collagen-like domains.

The protein localises to the secreted. It localises to the cell surface. With respect to regulation, the C1Q subcomplex is inhibited by sulfated molecules, such as triterpenoid sulfates, heparan sulfate, or chondroitin sulfates. Its function is as follows. Core component of the complement C1 complex, a multiprotein complex that initiates the classical pathway of the complement system, a cascade of proteins that leads to phagocytosis and breakdown of pathogens and signaling that strengthens the adaptive immune system. The classical complement pathway is initiated by the C1Q subcomplex of the C1 complex, which specifically binds IgG or IgM immunoglobulins complexed with antigens, forming antigen-antibody complexes on the surface of pathogens: C1QA, together with C1QB and C1QC, specifically recognizes and binds the Fc regions of IgG or IgM via its C1q domain. Immunoglobulin-binding activates the proenzyme C1R, which cleaves C1S, initiating the proteolytic cascade of the complement system. The C1Q subcomplex is activated by a hexamer of IgG complexed with antigens, while it is activated by a pentameric IgM. The C1Q subcomplex also recognizes and binds phosphatidylserine exposed on the surface of cells undergoing programmed cell death, possibly promoting activation of the complement system. This Sus scrofa (Pig) protein is Complement C1q subcomponent subunit A (C1QA).